The chain runs to 1030 residues: FACT complex subunit spt-16 (1030 aa).

Residues 424 to 445 adopt a coiled-coil conformation; that stretch reads RLKSNVIKFKEEQENREAEKDN. 2 stretches are compositionally biased toward basic and acidic residues: residues 435–449 and 464–477; these read EQENREAEKDNDQKK and TRNKTTNEELRKER. Disordered stretches follow at residues 435–477 and 491–514; these read EQEN…RKER and ARLSKQGGGTDEKKSKKSNVSYKT. Residues 623-645 are a coiled coil; that stretch reads RLIKEMQKRFKTEEAEEREKEGA. The interval 927–1030 is disordered; it reads VESDNEEAMD…KSGPSHKRRK (104 aa). 2 stretches are compositionally biased toward acidic residues: residues 929–951 and 958–983; these read SDNEEAMDDSDDSDAYDPEEEDA and ESDEDESEGEETESDDDDEGSLDSDE. Residues 987–1007 are a coiled coil; sequence KDWSDLEEEAANADKRREVEE. The span at 998–1014 shows a compositional bias: basic and acidic residues; the sequence is NADKRREVEEPSRDRDR. Over residues 1015 to 1030 the composition is skewed to basic residues; it reads KRPHSSKSGPSHKRRK.

This sequence belongs to the peptidase M24 family. SPT16 subfamily. In terms of assembly, component of the FACT complex, a stable heterodimer of spt-16 and hmg-3 or hmg-4. As to expression, expressed in the germline and somatic cells.

It is found in the nucleus. The protein resides in the chromosome. In terms of biological role, component of the FACT complex, a general chromatin factor that acts to reorganize nucleosomes. The FACT complex is involved in multiple processes that require DNA as a template such as mRNA elongation, DNA replication and DNA repair. During transcription elongation the FACT complex acts as a histone chaperone that both destabilizes and restores nucleosomal structure. It facilitates the passage of RNA polymerase II and transcription by promoting the dissociation of one histone H2A-H2B dimer from the nucleosome, then subsequently promotes the reestablishment of the nucleosome following the passage of RNA polymerase II. In embryos, promotes cell cycle progression and chromosomal segregation. Plays a role in the development of the anterior pharynx during embryonic development. This is FACT complex subunit spt-16 from Caenorhabditis elegans.